The following is a 196-amino-acid chain: Ribosome maturation factor RimP (196 aa).

A disordered region spans residues 164 to 196; sequence LAPQKPNKPGPKKPGHDKKKPSNEPAAGKPRAE. Residues 173-182 show a composition bias toward basic residues; that stretch reads GPKKPGHDKK.

The protein belongs to the RimP family.

The protein localises to the cytoplasm. Its function is as follows. Required for maturation of 30S ribosomal subunits. This Xanthomonas campestris pv. campestris (strain B100) protein is Ribosome maturation factor RimP.